A 204-amino-acid chain; its full sequence is MKLSGLYLVTKDYYNGNFFNIVEESLSAGVNILQYRDKTNPYNIKIEAGRRLKNLAYKYNVPFIVDDSPVLLDILDADGIHIGKDDPPFEYIKERFPGKIIGVSTYGDINLGIKYERLGADYIAFGSFFKTSTKDDAEMCDINILNNASKFNIPVFAIGGINTRNVDELLKYKISGIAVVSAIFDAANPGEATRTFLEKLRKIL.

Residues 34–38 and aspartate 66 each bind 4-amino-2-methyl-5-(diphosphooxymethyl)pyrimidine; that span reads QYRDK. The Mg(2+) site is built by aspartate 67 and aspartate 86. Serine 104 provides a ligand contact to 4-amino-2-methyl-5-(diphosphooxymethyl)pyrimidine. 131–133 is a binding site for 2-[(2R,5Z)-2-carboxy-4-methylthiazol-5(2H)-ylidene]ethyl phosphate; the sequence is TST. Lysine 134 contacts 4-amino-2-methyl-5-(diphosphooxymethyl)pyrimidine. 2-[(2R,5Z)-2-carboxy-4-methylthiazol-5(2H)-ylidene]ethyl phosphate is bound by residues glycine 160 and 180 to 181; that span reads VS.

The protein belongs to the thiamine-phosphate synthase family. Mg(2+) serves as cofactor.

It catalyses the reaction 2-[(2R,5Z)-2-carboxy-4-methylthiazol-5(2H)-ylidene]ethyl phosphate + 4-amino-2-methyl-5-(diphosphooxymethyl)pyrimidine + 2 H(+) = thiamine phosphate + CO2 + diphosphate. It carries out the reaction 2-(2-carboxy-4-methylthiazol-5-yl)ethyl phosphate + 4-amino-2-methyl-5-(diphosphooxymethyl)pyrimidine + 2 H(+) = thiamine phosphate + CO2 + diphosphate. The enzyme catalyses 4-methyl-5-(2-phosphooxyethyl)-thiazole + 4-amino-2-methyl-5-(diphosphooxymethyl)pyrimidine + H(+) = thiamine phosphate + diphosphate. It participates in cofactor biosynthesis; thiamine diphosphate biosynthesis; thiamine phosphate from 4-amino-2-methyl-5-diphosphomethylpyrimidine and 4-methyl-5-(2-phosphoethyl)-thiazole: step 1/1. Its function is as follows. Condenses 4-methyl-5-(beta-hydroxyethyl)thiazole monophosphate (THZ-P) and 2-methyl-4-amino-5-hydroxymethyl pyrimidine pyrophosphate (HMP-PP) to form thiamine monophosphate (TMP). The chain is Thiamine-phosphate synthase from Picrophilus torridus (strain ATCC 700027 / DSM 9790 / JCM 10055 / NBRC 100828 / KAW 2/3).